The primary structure comprises 470 residues: Pyruvate kinase I (470 aa).

Arginine 32 provides a ligand contact to substrate. The K(+) site is built by asparagine 34, serine 36, aspartate 66, and threonine 67. Position 34–37 (34–37 (NFSH)) interacts with ATP. ATP is bound by residues arginine 73 and lysine 156. A substrate-binding site is contributed by lysine 220. Position 222 (glutamate 222) interacts with Mg(2+). Residues glycine 245, aspartate 246, and threonine 278 each contribute to the substrate site. Residue aspartate 246 coordinates Mg(2+).

The protein belongs to the pyruvate kinase family. As to quaternary structure, homotetramer. Requires Mg(2+) as cofactor. The cofactor is K(+).

The enzyme catalyses pyruvate + ATP = phosphoenolpyruvate + ADP + H(+). It participates in carbohydrate degradation; glycolysis; pyruvate from D-glyceraldehyde 3-phosphate: step 5/5. Belongs to type I PK; fructose 1,6-bisphosphate-activated. Functionally, catalyzes the formation of pyruvate in the last step of glycolysis, it is irreversible under physiological conditions. The reaction is critical for the control of metabolic flux in the second part of glycolysis. The sequence is that of Pyruvate kinase I (pykF) from Salmonella typhimurium (strain LT2 / SGSC1412 / ATCC 700720).